The primary structure comprises 63 residues: Large ribosomal subunit protein bL35 (63 aa).

The protein belongs to the bacterial ribosomal protein bL35 family.

This Thermobifida fusca (strain YX) protein is Large ribosomal subunit protein bL35.